The chain runs to 435 residues: Rho GTPase-activating protein 4 (435 aa).

A disordered region spans residues 1–59 (MAKVLKSSQSCHFPSPSSSSSTSCGGGNDGSNRDPHSPFNISRREEEEEEEERSEKERE). Low complexity predominate over residues 7 to 23 (SSQSCHFPSPSSSSSTS). In terms of domain architecture, CRIB spans 93–106 (IGVPTDVRHVAHVT). The 182-residue stretch at 138-319 (VSTESMQLSY…LIVKTLKDRK (182 aa)) folds into the Rho-GAP domain. Positions 321 to 343 (SRDKLVPASNPSPRDHNGDQSSS) are disordered.

In terms of biological role, acts as a GTPase activator for the Rac-type GTPase by converting it to an inactive GDP-bound state. Acts as a negative feedback regulator in tolerance to oxygen deprivation which requires ARAC4/ROP2. The chain is Rho GTPase-activating protein 4 (ROPGAP4) from Arabidopsis thaliana (Mouse-ear cress).